Consider the following 197-residue polypeptide: MFLRSVTRAAARSSAVPTTGLRSYRTVSGPMACLNARPQTEKKSIAPQQTRAASEHAISNPTLAGIEKRWEAMPPQEQAELWMQLRDRMKVDWHQMTLQEKKAAYWISFGPHGPRSVPPKGENLKIFFKVAQLTLVSFGIFYVIHLFAKPQPKTMTKEWQEASNEYAKQEKINPIYGISAEGYEGKGFVQSPPAEKQ.

A mitochondrion-targeting transit peptide spans 1-13 (MFLRSVTRAAARS). Residues 14 to 129 (SAVPTTGLRS…KGENLKIFFK (116 aa)) are Mitochondrial matrix-facing. The helical transmembrane segment at 130-147 (VAQLTLVSFGIFYVIHLF) threads the bilayer. At 148–197 (AKPQPKTMTKEWQEASNEYAKQEKINPIYGISAEGYEGKGFVQSPPAEKQ) the chain is on the mitochondrial intermembrane side.

The protein belongs to the cytochrome c oxidase IV family. As to quaternary structure, component of the cytochrome c oxidase (complex IV, CIV), a multisubunit enzyme composed of a catalytic core of 3 subunits and seevral supernumerary subunits. The complex exists as a monomer or a dimer and forms supercomplexes (SCs) in the inner mitochondrial membrane with ubiquinol-cytochrome c oxidoreductase (cytochrome b-c1 complex, complex III, CIII).

The protein resides in the mitochondrion inner membrane. Its pathway is energy metabolism; oxidative phosphorylation. Functionally, component of the cytochrome c oxidase, the last enzyme in the mitochondrial electron transport chain which drives oxidative phosphorylation. The respiratory chain contains 3 multisubunit complexes succinate dehydrogenase (complex II, CII), ubiquinol-cytochrome c oxidoreductase (cytochrome b-c1 complex, complex III, CIII) and cytochrome c oxidase (complex IV, CIV), that cooperate to transfer electrons derived from NADH and succinate to molecular oxygen, creating an electrochemical gradient over the inner membrane that drives transmembrane transport and the ATP synthase. Cytochrome c oxidase is the component of the respiratory chain that catalyzes the reduction of oxygen to water. Electrons originating from reduced cytochrome c in the intermembrane space (IMS) are transferred via the dinuclear copper A center (CU(A)) of subunit 2 and heme A of subunit 1 to the active site in subunit 1, a binuclear center (BNC) formed by heme A3 and copper B (CU(B)). The BNC reduces molecular oxygen to 2 water molecules using 4 electrons from cytochrome c in the IMS and 4 protons from the mitochondrial matrix. The polypeptide is Cytochrome c oxidase polypeptide 5, mitochondrial (cox5) (Aspergillus niger).